The chain runs to 357 residues: Endo-1,4-beta-xylanase Xyn11B (357 aa).

Positions 1 to 27 (MKIFQNTKNVIVSIAWAAALCTSAVSA) are cleaved as a signal peptide. The GH11 domain maps to 29–226 (TLTSNSTGTN…SRGSSDITVS (198 aa)). E116 acts as the Nucleophile in catalysis. The Proton donor role is filled by E213. Residues 220 to 245 (SSDITVSQGGSSGGGNSSSSSSASGG) are disordered.

The protein belongs to the glycosyl hydrolase 11 (cellulase G) family.

It is found in the secreted. The catalysed reaction is Endohydrolysis of (1-&gt;4)-beta-D-xylosidic linkages in xylans.. It participates in glycan degradation; xylan degradation. Functionally, endo-acting xylanase which specifically cleaves internal linkages on the xylan backbone, releasing xylooligosaccharides. Is able to hydrolyze glucuronoxylan and the arabinoxylan from wheat. The sequence is that of Endo-1,4-beta-xylanase Xyn11B (xyn11B) from Cellvibrio japonicus (Pseudomonas fluorescens subsp. cellulosa).